Consider the following 446-residue polypeptide: O-antigen polymerase (446 aa).

11 consecutive transmembrane segments (helical) span residues 11 to 31 (ICSY…VINE), 33 to 53 (FCEI…VIII), 58 to 78 (QGGF…FILI), 104 to 124 (IYVF…VLLY), 147 to 167 (QLSM…IKSY), 186 to 206 (LYDE…SLLF), 211 to 231 (NFIL…LVGL), 252 to 272 (LKIK…SLFL), 355 to 375 (IYLG…SLAF), 391 to 411 (KLAY…IYFA), and 415 to 435 (LFDF…LSIV).

The protein localises to the cell inner membrane. The catalysed reaction is n lipid-linked O-antigen repeat units = a lipid-linked O antigen + (n-1) polyisoprenyl diphosphate.. It participates in bacterial outer membrane biogenesis; LPS O-antigen biosynthesis. Functionally, polymerase involved in the biosynthesis of the lipopolysaccharide (LPS). Catalyzes the polymerization of the O-antigen repeat units on the periplasmic face of the inner membrane, leading to the formation of the lipid-linked O-antigen molecule. In vitro, shows a preference for bacteria-based, undecaprenyl-containing substrates rather than eukaryote-based, dolichol-containing substrates. The chain is O-antigen polymerase from Escherichia coli.